The sequence spans 321 residues: Cytochrome c biogenesis protein CcsA (321 aa).

The next 8 membrane-spanning stretches (helical) occupy residues 9–29 (ILTH…LMTL), 44–64 (GLIA…IYSG), 71–91 (LYES…VPYF), 97–117 (LLST…TSGL), 143–163 (MILS…LLVI), 227–247 (VISL…VWAN), 261–275 (TWAF…IYLH), and 288–308 (AIVA…VNLL).

Belongs to the CcmF/CycK/Ccl1/NrfE/CcsA family. May interact with Ccs1.

It localises to the plastid. It is found in the chloroplast thylakoid membrane. Functionally, required during biogenesis of c-type cytochromes (cytochrome c6 and cytochrome f) at the step of heme attachment. The polypeptide is Cytochrome c biogenesis protein CcsA (Nandina domestica (Heavenly bamboo)).